A 63-amino-acid chain; its full sequence is Translational regulator CsrA (63 aa).

It belongs to the CsrA/RsmA family. Homodimer; the beta-strands of each monomer intercalate to form a hydrophobic core, while the alpha-helices form wings that extend away from the core.

It localises to the cytoplasm. In terms of biological role, a key translational regulator that binds mRNA to regulate translation initiation and/or mRNA stability. Mediates global changes in gene expression, shifting from rapid growth to stress survival by linking envelope stress, the stringent response and the catabolite repression systems. Usually binds in the 5'-UTR; binding at or near the Shine-Dalgarno sequence prevents ribosome-binding, repressing translation, binding elsewhere in the 5'-UTR can activate translation and/or stabilize the mRNA. Its function is antagonized by small RNA(s). This Haemophilus influenzae (strain PittEE) protein is Translational regulator CsrA.